Consider the following 384-residue polypeptide: Na(+)/H(+) antiporter NhaA (384 aa).

The next 11 membrane-spanning stretches (helical) occupy residues 7-27 (FYNL…LAII), 58-78 (LLLW…GLEI), 94-114 (LVPA…FIFF), 124-144 (GWAI…SLLG), 153-173 (ILLT…IALF), 179-199 (SLLS…LNYF), 204-224 (ISVF…SGVH), 256-276 (VVFL…FVGL), 285-305 (VVLG…FLSL), 325-345 (VYGI…IGSL), and 357-377 (MVKI…FLVL).

Belongs to the NhaA Na(+)/H(+) (TC 2.A.33) antiporter family.

Its subcellular location is the cell inner membrane. The enzyme catalyses Na(+)(in) + 2 H(+)(out) = Na(+)(out) + 2 H(+)(in). Its function is as follows. Na(+)/H(+) antiporter that extrudes sodium in exchange for external protons. The protein is Na(+)/H(+) antiporter NhaA of Legionella pneumophila (strain Corby).